A 350-amino-acid chain; its full sequence is MKEVSLRGISKTFGQLTVLDRIDLEIHSGEFLVLVGPSGCGKSTLLRMVAGLEPISGGDLVIGGERANELPPQKRNIAMVFQSYALFPHMTARENIGFGPRIRGEKAAETAAKVDHAASILNLHSYLDRYPRQLSGGQRQRVAMGRAIVREPSVFLFDEPLSNLDAQLRVQMRTEIKALHQRLKSTVIYVTHDQIEAMTMADRIVVMNQGKIQQIGAPLDLYDRPANKFVAGFIGSPSMSFIPGTVADGFFCTGEGEKIAVSAAAKGARAAEAGIRPENFVIAREGAGLTLVVEVIEPTGPETHIYGRIAGEPVRAVFRERIQLAPGEQVPVTAGSEHIHLFDKESGLPL.

One can recognise an ABC transporter domain in the interval 4–234; sequence VSLRGISKTF…PANKFVAGFI (231 aa). Residue 36 to 43 participates in ATP binding; that stretch reads GPSGCGKS.

Belongs to the ABC transporter superfamily. The complex is composed of two ATP-binding proteins (BruAb2_0487), two transmembrane proteins (BruAb2_0483) and a solute-binding protein (BruAb2_0484).

It localises to the cell inner membrane. Functionally, probably part of an ABC transporter complex. Probably responsible for energy coupling to the transport system. The sequence is that of Putative ATP-binding protein BruAb2_0487 from Brucella abortus biovar 1 (strain 9-941).